A 68-amino-acid chain; its full sequence is Protein SlyX homolog (68 aa).

This sequence belongs to the SlyX family.

The sequence is that of Protein SlyX homolog from Brucella melitensis biotype 1 (strain ATCC 23456 / CCUG 17765 / NCTC 10094 / 16M).